A 171-amino-acid chain; its full sequence is CASP-like protein 5A2 (171 aa).

The Cytoplasmic segment spans residues 1–39 (MDGSAHLRDPPGPAVLRWRLEDMHIIPGTSGSLALRICQ). Residues 40 to 60 (FSAAIVSFSVMISAANFSSVT) form a helical membrane-spanning segment. Residue Ala-61 is a topological domain, extracellular. The helical transmembrane segment at 62-82 (FCFLVAAMVLQCMWSLSVATI) threads the bilayer. Residues 83–106 (EGYAMLVGRSLRDSPLLSLFAVGD) are Cytoplasmic-facing. A helical transmembrane segment spans residues 107–127 (WVTAVITFAGACASAGIAVLV). The Extracellular segment spans residues 128 to 148 (GRDIHRGCDVNFCGRYAAAAG). Residues 149–169 (MAFLSWLLISTSFLFTFWLLA) traverse the membrane as a helical segment. Topologically, residues 170 to 171 (TR) are cytoplasmic.

It belongs to the Casparian strip membrane proteins (CASP) family. As to quaternary structure, homodimer and heterodimers.

The protein resides in the cell membrane. The protein is CASP-like protein 5A2 of Pteridium aquilinum subsp. aquilinum (Bracken fern).